The following is a 288-amino-acid chain: Protease HtpX (288 aa).

Transmembrane regions (helical) follow at residues 5-25 (IALF…VMSL) and 34-54 (SGLL…SLLL). His-140 contacts Zn(2+). Glu-141 is a catalytic residue. Residue His-144 coordinates Zn(2+). The next 2 helical transmembrane spans lie at 155–175 (LLQG…GGII) and 190–210 (FAYF…ATMI). Residue Glu-219 coordinates Zn(2+).

It belongs to the peptidase M48B family. Requires Zn(2+) as cofactor.

Its subcellular location is the cell inner membrane. The sequence is that of Protease HtpX from Stenotrophomonas maltophilia (strain R551-3).